The sequence spans 124 residues: MKLLVVDDSSTMRRIIKNTLSRLGYEDVLEAEHGVEAWEKLDANADTKVLITDWNMPEMNGLDLVKKVRSDSRFKEIPIIMITTEGGKAEVITALKAGVNNYIVKPFTPQVLKEKLEVVLGTND.

The Response regulatory domain maps to 2–120; that stretch reads KLLVVDDSST…VLKEKLEVVL (119 aa). Mg(2+)-binding residues include Asp-7, Asp-8, Asp-53, and Asn-55. Position 53 is a 4-aspartylphosphate (Asp-53).

Interacts (when phosphorylated) with FliM. Mg(2+) is required as a cofactor. Phosphorylated by CheAY. Dephosphorylated (inactivated) by CheZ.

It localises to the cytoplasm. Functionally, chemotactic response regulator protein that modulates the rotation direction of bacterial flagellar motors. Plays an important role in the colonization and infection of Helicobacter pylori. Upon phosphorylation by CheA, interacts with the flagellar motor protein FliM to cause clockwise flagellar rotation and bacterial reversals, as opposed to straight swimming when CheY1 is not phosphorylated. The protein is Chemotaxis protein CheY1 of Helicobacter pylori (strain ATCC 700392 / 26695) (Campylobacter pylori).